A 374-amino-acid polypeptide reads, in one-letter code: Chaperone protein DnaJ (374 aa).

The J domain occupies 5 to 70; that stretch reads DYYEVLGVER…SKRAAYDQYG (66 aa). The CR-type zinc finger occupies 133–211; it reads GTTVNIRVPT…CHGEGRVEEY (79 aa). Residues Cys146, Cys149, Cys163, Cys166, Cys185, Cys188, Cys199, and Cys202 each contribute to the Zn(2+) site. CXXCXGXG motif repeat units follow at residues 146–153, 163–170, 185–192, and 199–206; these read CKPCDGSG, CPTCGGIG, CPRCHGQG, and CDSCHGEG.

The protein belongs to the DnaJ family. In terms of assembly, homodimer. It depends on Zn(2+) as a cofactor.

It localises to the cytoplasm. Functionally, participates actively in the response to hyperosmotic and heat shock by preventing the aggregation of stress-denatured proteins and by disaggregating proteins, also in an autonomous, DnaK-independent fashion. Unfolded proteins bind initially to DnaJ; upon interaction with the DnaJ-bound protein, DnaK hydrolyzes its bound ATP, resulting in the formation of a stable complex. GrpE releases ADP from DnaK; ATP binding to DnaK triggers the release of the substrate protein, thus completing the reaction cycle. Several rounds of ATP-dependent interactions between DnaJ, DnaK and GrpE are required for fully efficient folding. Also involved, together with DnaK and GrpE, in the DNA replication of plasmids through activation of initiation proteins. This Pseudomonas fluorescens (strain ATCC BAA-477 / NRRL B-23932 / Pf-5) protein is Chaperone protein DnaJ.